The following is a 223-amino-acid chain: Dephospho-CoA kinase (223 aa).

A DPCK domain is found at 3–204; sequence VFGLSGGAGS…AGRHRFRVAR (202 aa). Position 11-16 (11-16) interacts with ATP; it reads GSGKST.

This sequence belongs to the CoaE family.

The protein resides in the cytoplasm. The enzyme catalyses 3'-dephospho-CoA + ATP = ADP + CoA + H(+). It functions in the pathway cofactor biosynthesis; coenzyme A biosynthesis; CoA from (R)-pantothenate: step 5/5. Catalyzes the phosphorylation of the 3'-hydroxyl group of dephosphocoenzyme A to form coenzyme A. The protein is Dephospho-CoA kinase of Anaplasma marginale (strain St. Maries).